The sequence spans 89 residues: Large ribosomal subunit protein bL27 (89 aa).

The disordered stretch occupies residues 1–21 (MAHKKAGGSSRNGRDSAGRRL).

The protein belongs to the bacterial ribosomal protein bL27 family.

The sequence is that of Large ribosomal subunit protein bL27 from Erythrobacter litoralis (strain HTCC2594).